A 376-amino-acid chain; its full sequence is Glucose-1-phosphate adenylyltransferase (376 aa).

Alpha-D-glucose 1-phosphate contacts are provided by residues Tyr101, Gly166, 181 to 182, and Ser192; that span reads EK.

The protein belongs to the bacterial/plant glucose-1-phosphate adenylyltransferase family. In terms of assembly, homotetramer.

The enzyme catalyses alpha-D-glucose 1-phosphate + ATP + H(+) = ADP-alpha-D-glucose + diphosphate. It functions in the pathway glycan biosynthesis; glycogen biosynthesis. Its function is as follows. Involved in the biosynthesis of ADP-glucose, a building block required for the elongation reactions to produce glycogen. Catalyzes the reaction between ATP and alpha-D-glucose 1-phosphate (G1P) to produce pyrophosphate and ADP-Glc. The sequence is that of Glucose-1-phosphate adenylyltransferase from Bacillus mycoides (strain KBAB4) (Bacillus weihenstephanensis).